Here is a 557-residue protein sequence, read N- to C-terminus: Potassium-transporting ATPase potassium-binding subunit (557 aa).

10 helical membrane passes run 1–21 (MEIL…IPIG), 62–82 (QYIF…YIIL), 132–152 (IVIT…ALAF), 176–196 (ILLP…VPQT), 253–273 (VQII…GHMI), 279–299 (AVAI…ICFS), 371–391 (IFGG…LTVF), 415–435 (LVAF…ALAL), 482–502 (VSAG…LLAV), and 528–548 (VTLI…AVAL).

This sequence belongs to the KdpA family. In terms of assembly, the system is composed of three essential subunits: KdpA, KdpB and KdpC.

The protein resides in the cell membrane. Part of the high-affinity ATP-driven potassium transport (or Kdp) system, which catalyzes the hydrolysis of ATP coupled with the electrogenic transport of potassium into the cytoplasm. This subunit binds the extracellular potassium ions and delivers the ions to the membrane domain of KdpB through an intramembrane tunnel. The protein is Potassium-transporting ATPase potassium-binding subunit of Clostridium acetobutylicum (strain ATCC 824 / DSM 792 / JCM 1419 / IAM 19013 / LMG 5710 / NBRC 13948 / NRRL B-527 / VKM B-1787 / 2291 / W).